The following is a 291-amino-acid chain: Shikimate dehydrogenase (NADP(+)) (291 aa).

Residues 18-20 and threonine 70 contribute to the shikimate site; that span reads SLS. Lysine 74 (proton acceptor) is an active-site residue. Shikimate contacts are provided by asparagine 95 and aspartate 110. Residues 134–138 and valine 228 contribute to the NADP(+) site; that span reads GAGGA. Tyrosine 230 serves as a coordination point for shikimate. Glycine 251 lines the NADP(+) pocket.

It belongs to the shikimate dehydrogenase family. As to quaternary structure, homodimer.

The catalysed reaction is shikimate + NADP(+) = 3-dehydroshikimate + NADPH + H(+). Its pathway is metabolic intermediate biosynthesis; chorismate biosynthesis; chorismate from D-erythrose 4-phosphate and phosphoenolpyruvate: step 4/7. Its function is as follows. Involved in the biosynthesis of the chorismate, which leads to the biosynthesis of aromatic amino acids. Catalyzes the reversible NADPH linked reduction of 3-dehydroshikimate (DHSA) to yield shikimate (SA). The protein is Shikimate dehydrogenase (NADP(+)) of Streptomyces avermitilis (strain ATCC 31267 / DSM 46492 / JCM 5070 / NBRC 14893 / NCIMB 12804 / NRRL 8165 / MA-4680).